The sequence spans 486 residues: Surface lipoprotein assembly modifier (486 aa).

Positions 1–29 (MKNGVKQISFLSLIGLSLIGLSLTNIAWA) are cleaved as a signal peptide. The N-terminal domain stretch occupies residues 30-197 (KVARPKNDTL…QYLLTLNQRN (168 aa)). The C-terminal probable beta barrel stretch occupies residues 198-486 (QWIWQVGLNF…RIYLEIGKIF (289 aa)). A run of 14 beta stranded transmembrane segments spans residues 199-209 (WIWQVGLNFLN), 237-248 (GRVFFISRKKWP), 253-262 (FFSKTMFNGN), 276-286 (TLRIGGGLGYQ), 290-300 (VEVSLFPFQEK), 320-330 (LGIRLENVDWL), 334-344 (WQISTALEYGE), 358-367 (YFISSTLFYL), 373-382 (FWFVGMDFHR), 395-404 (KTLRLGWGQD), 409-419 (ISSRLTFSYAN), 437-446 (YATTITLWHR), 453-463 (LTPKLSWDYQK), and 476-486 (NRIYLEIGKIF).

This sequence belongs to the Slam family.

Its subcellular location is the cell outer membrane. Its function is as follows. Required for correct export to the cell surface of some cell outer membrane lipoproteins (tested with TpbP) upon heterologous expression in E.coli and probably also in Haemophilus. In Haemophilus influenzae (strain 86-028NP), this protein is Surface lipoprotein assembly modifier.